Consider the following 278-residue polypeptide: 4-hydroxy-tetrahydrodipicolinate reductase (278 aa).

NAD(+) contacts are provided by residues 13–18 and 111–113; these read GAAGKM and GTT. The active-site Proton donor/acceptor is histidine 167. Histidine 168 contacts (S)-2,3,4,5-tetrahydrodipicolinate. Residue lysine 171 is the Proton donor of the active site. Residue 177–178 participates in (S)-2,3,4,5-tetrahydrodipicolinate binding; sequence GT.

Belongs to the DapB family.

The protein localises to the cytoplasm. The enzyme catalyses (S)-2,3,4,5-tetrahydrodipicolinate + NAD(+) + H2O = (2S,4S)-4-hydroxy-2,3,4,5-tetrahydrodipicolinate + NADH + H(+). It carries out the reaction (S)-2,3,4,5-tetrahydrodipicolinate + NADP(+) + H2O = (2S,4S)-4-hydroxy-2,3,4,5-tetrahydrodipicolinate + NADPH + H(+). It participates in amino-acid biosynthesis; L-lysine biosynthesis via DAP pathway; (S)-tetrahydrodipicolinate from L-aspartate: step 4/4. Catalyzes the conversion of 4-hydroxy-tetrahydrodipicolinate (HTPA) to tetrahydrodipicolinate. This is 4-hydroxy-tetrahydrodipicolinate reductase from Nostoc sp. (strain PCC 7120 / SAG 25.82 / UTEX 2576).